Consider the following 169-residue polypeptide: Ribosome maturation factor RimM (169 aa).

The region spanning 92 to 166 is the PRC barrel domain; that stretch reads NKEYYWNDIF…IVIDLTNLNN (75 aa).

The protein belongs to the RimM family. Binds ribosomal protein uS19.

It localises to the cytoplasm. In terms of biological role, an accessory protein needed during the final step in the assembly of 30S ribosomal subunit, possibly for assembly of the head region. Essential for efficient processing of 16S rRNA. May be needed both before and after RbfA during the maturation of 16S rRNA. It has affinity for free ribosomal 30S subunits but not for 70S ribosomes. The polypeptide is Ribosome maturation factor RimM (Buchnera aphidicola subsp. Cinara cedri (strain Cc)).